Consider the following 1294-residue polypeptide: MSQQENGDVATELIENRLSFSRIPRISLHVRDLSIVASKTNTTLVNTFSMDLPSGSVMAVMGGSGSGKTTLLNVLASKISGGLTHNGSIRYVLEDTGSEPNETEPKRAHLDGQDHPIQKHVIMAYLPQQDVLSPRLTCRETLKFAADLKLNSSERTKKLMVEQLIEELGLKDCADTLVGDNSHRGLSGGEKRRLSIGTQMISNPSIMFLDEPTTGLDAYSAFLVIKTLKKLAKEDGRTFIMSIHQPRSDILFLLDQVCILSKGNVVYCDKMDNTIPYFESIGYHVPQLVNPADYFIDLSSVDSRSDKEEAATQSRLNSLIDHWHDYERTHLQLQAESYISNATEIQIQNMTTRLPFWKQVTVLTRRNFKLNFSDYVTLISTFAEPLIIGTVCGWIYYKPDKSSIGGLRTTTACLYASTILQCYLYLLFDTYRLCEQDIALYDRERAEGSVTPLAFIVARKISLFLSDDFAMTMIFVSITYFMFGLEADARKFFYQFAVVFLCQLSCSGLSMLSVAVSRDFSKASLVGNMTFTVLSMGCGFFVNAKVMPVYVRWIKYIAFTWYSFGTLMSSTFTNSYCTTDNLDECLGNQILEVYGFPRNWITVPAVVLLCWSVGYFVVGAIILYLHKIDITLQNEVKSKQKKIKKKSPTGMKPEIQLLDDVYHQKDLEAEKGKNIHITIKLEDIDLRVIFSAPFSNWKEGNFHHETKEILQSVNAIFKPGMINAIMGPSGSGKSSLLNLISGRLKSSVFAKFDTSGSIMFNDIQVSELMFKNVCSYVSQDDDHLLAALTVKETLKYAAALRLHHLTEAERMERTDNLIRSLGLKHCENNIIGNEFVKGISGGEKRRVTMGVQLLNDPPILLLDEPTSGLDSFTSATILEILEKLCREQGKTIIITIHQPRSELFKRFGNVLLLAKSGRTAFNGSPDEMIAYFTELGYNCPSFTNVADFFLDLISVNTQNEQNEISSRARVEKILSAWKANMDNESLSPTPISEKQQYSQESFFTEYSEFVRKPANLVLAYIVNVKRQFTTTRRSFDSLMARIAQIPGLGVIFALFFAPVKHNYTSISNRLGLAQESTALYFVGMLGNLACYPTERDYFYEEYNDNVYGIAPFFLAYMTLELPLSALASVLYAVFTVLACGLPRTAGNFFATVYCSFIVTCCGEALGIMTNTFFERPGFVVNCISIILSIGTQMSGLMSLGMSRVLKGFNYLNPVGYTSMIIINFAFPGNLKLTCEDGGKNSDGTCEFANGHDVLVSYGLVRNTQKYLGIIVCVAIIYRLIAFFILKAKLEWIKW.

Residues 1-375 (MSQQENGDVA…RNFKLNFSDY (375 aa)) are Extracellular-facing. An ABC transporter 1 domain is found at 28-287 (LHVRDLSIVA…FESIGYHVPQ (260 aa)). N41 carries N-linked (GlcNAc...) asparagine glycosylation. Residue 62 to 69 (GGSGSGKT) participates in ATP binding. N86, N101, N151, N341, N349, and N371 each carry an N-linked (GlcNAc...) asparagine glycan. A helical transmembrane segment spans residues 376-396 (VTLISTFAEPLIIGTVCGWIY). The Cytoplasmic portion of the chain corresponds to 397-495 (YKPDKSSIGG…EADARKFFYQ (99 aa)). The helical transmembrane segment at 496–516 (FAVVFLCQLSCSGLSMLSVAV) threads the bilayer. Over 517 to 530 (SRDFSKASLVGNMT) the chain is Extracellular. N528 carries N-linked (GlcNAc...) asparagine glycosylation. A helical transmembrane segment spans residues 531–551 (FTVLSMGCGFFVNAKVMPVYV). At 552 to 604 (RWIKYIAFTWYSFGTLMSSTFTNSYCTTDNLDECLGNQILEVYGFPRNWITVP) the chain is on the cytoplasmic side. The helical transmembrane segment at 605–625 (AVVLLCWSVGYFVVGAIILYL) threads the bilayer. Over 626–1038 (HKIDITLQNE…TTTRRSFDSL (413 aa)) the chain is Extracellular. In terms of domain architecture, ABC transporter 2 spans 679 to 941 (IKLEDIDLRV…FTELGYNCPS (263 aa)). 727–734 (GPSGSGKS) provides a ligand contact to ATP. N983 carries N-linked (GlcNAc...) asparagine glycosylation. A helical membrane pass occupies residues 1039–1059 (MARIAQIPGLGVIFALFFAPV). Residues 1060–1120 (KHNYTSISNR…PFFLAYMTLE (61 aa)) are Cytoplasmic-facing. The helical transmembrane segment at 1121 to 1141 (LPLSALASVLYAVFTVLACGL) threads the bilayer. The Extracellular portion of the chain corresponds to 1142–1266 (PRTAGNFFAT…YGLVRNTQKY (125 aa)). Residues 1267-1287 (LGIIVCVAIIYRLIAFFILKA) form a helical membrane-spanning segment. The Cytoplasmic portion of the chain corresponds to 1288–1294 (KLEWIKW).

Belongs to the ABC transporter superfamily. ABCG family. PDR (TC 3.A.1.205) subfamily.

Its subcellular location is the membrane. This is an uncharacterized protein from Saccharomyces cerevisiae (strain ATCC 204508 / S288c) (Baker's yeast).